We begin with the raw amino-acid sequence, 320 residues long: Myoblast determination protein 1 (320 aa).

Residue M1 forms a Peptide (Met-Gly) (interchain with G-Cter in ubiquitin) linkage. Residue K104 is modified to N6-methyllysine; by EHMT2. Residues 109–160 (DRRKAATMRERRRLSKVNEAFETLKRCTSSNPNQRLPKVEILRNAIRYIEGL) form the bHLH domain. Disordered stretches follow at residues 174-219 (AAAA…PPSG) and 262-320 (ESPA…YQVL). 2 stretches are compositionally biased toward polar residues: residues 197–207 (SDASSPRSNCS) and 291–301 (GESSGDPTQSP).

In terms of assembly, efficient DNA binding requires dimerization with another bHLH protein. Seems to form active heterodimers with ITF-2. Interacts with SUV39H1. Interacts with DDX5. Interacts with CHD2. Interacts with TSC22D3. Interacts with SETD3. Interacts with P-TEFB complex; promotes the transcriptional activity of MYOD1 through its CDK9-mediated phosphorylation. Interacts with CSRP3. Interacts with NUPR1. In terms of processing, phosphorylated by CDK9. This phosphorylation promotes its function in muscle differentiation. Acetylated by a complex containing EP300 and PCAF. The acetylation is essential to activate target genes. Conversely, its deacetylation by SIRT1 inhibits its function. Post-translationally, ubiquitinated on the N-terminus; which is required for proteasomal degradation. In terms of processing, methylation at Lys-104 by EHMT2/G9a inhibits myogenic activity.

Its subcellular location is the nucleus. Its function is as follows. Acts as a transcriptional activator that promotes transcription of muscle-specific target genes and plays a role in muscle differentiation. Together with MYF5 and MYOG, co-occupies muscle-specific gene promoter core region during myogenesis. Induces fibroblasts to differentiate into myoblasts. Interacts with and is inhibited by the twist protein. This interaction probably involves the basic domains of both proteins. The polypeptide is Myoblast determination protein 1 (MYOD1) (Homo sapiens (Human)).